The following is a 199-amino-acid chain: 7-methyl-GTP pyrophosphatase (199 aa).

The active-site Proton acceptor is aspartate 74.

Belongs to the Maf family. YceF subfamily. It depends on a divalent metal cation as a cofactor.

The protein resides in the cytoplasm. It carries out the reaction N(7)-methyl-GTP + H2O = N(7)-methyl-GMP + diphosphate + H(+). Its function is as follows. Nucleoside triphosphate pyrophosphatase that hydrolyzes 7-methyl-GTP (m(7)GTP). May have a dual role in cell division arrest and in preventing the incorporation of modified nucleotides into cellular nucleic acids. This Albidiferax ferrireducens (strain ATCC BAA-621 / DSM 15236 / T118) (Rhodoferax ferrireducens) protein is 7-methyl-GTP pyrophosphatase.